We begin with the raw amino-acid sequence, 311 residues long: Methionyl-tRNA formyltransferase (311 aa).

110-113 (SLLP) contributes to the (6S)-5,6,7,8-tetrahydrofolate binding site.

Belongs to the Fmt family.

The catalysed reaction is L-methionyl-tRNA(fMet) + (6R)-10-formyltetrahydrofolate = N-formyl-L-methionyl-tRNA(fMet) + (6S)-5,6,7,8-tetrahydrofolate + H(+). Attaches a formyl group to the free amino group of methionyl-tRNA(fMet). The formyl group appears to play a dual role in the initiator identity of N-formylmethionyl-tRNA by promoting its recognition by IF2 and preventing the misappropriation of this tRNA by the elongation apparatus. The chain is Methionyl-tRNA formyltransferase from Streptococcus pneumoniae serotype 2 (strain D39 / NCTC 7466).